The chain runs to 600 residues: Probable translation initiation factor IF-2 (600 aa).

The 216-residue stretch at 13-228 (LRTPIVAVLG…VLMGLAQRYM (216 aa)) folds into the tr-type G domain. The interval 22-29 (GHVDHGKT) is G1. Position 22-29 (22-29 (GHVDHGKT)) interacts with GTP. The interval 47 to 51 (AITQH) is G2. The G3 stretch occupies residues 84 to 87 (DTPG). Residues 84–88 (DTPGH) and 138–141 (NKID) contribute to the GTP site. Residues 138–141 (NKID) form a G4 region. A disordered region spans residues 140-162 (IDTTPGWNPNPDAPVQGTYDDQS). The tract at residues 206–208 (SAE) is G5.

It belongs to the TRAFAC class translation factor GTPase superfamily. Classic translation factor GTPase family. IF-2 subfamily.

Its function is as follows. Function in general translation initiation by promoting the binding of the formylmethionine-tRNA to ribosomes. Seems to function along with eIF-2. The protein is Probable translation initiation factor IF-2 of Halobacterium salinarum (strain ATCC 700922 / JCM 11081 / NRC-1) (Halobacterium halobium).